A 358-amino-acid chain; its full sequence is Insulin gene enhancer protein isl-2b (358 aa).

2 LIM zinc-binding domains span residues 27–80 (CVGC…CKRD) and 89–143 (CAKC…RADH). The homeobox DNA-binding region spans 191-250 (TTRVRTVLNEKQLHTLRTCYNANPRPDALMKEQLVEMTGLSPRVIRVWFQNKRCKDKKRS). Over residues 325–335 (ESGSLGNSSGS) the composition is skewed to low complexity. The disordered stretch occupies residues 325-358 (ESGSLGNSSGSDVTSLSSQLPDTPNSMVPSPVET). A compositionally biased stretch (polar residues) spans 336 to 358 (DVTSLSSQLPDTPNSMVPSPVET).

Its subcellular location is the nucleus. Functionally, binds to one of the cis-acting domain of the insulin gene enhancer. May be involved in the regional specification of the myotome and also in target recognition by the caudal primary neuron. This Danio rerio (Zebrafish) protein is Insulin gene enhancer protein isl-2b (isl2b).